The primary structure comprises 957 residues: Glycine dehydrogenase (decarboxylating) (957 aa).

N6-(pyridoxal phosphate)lysine is present on Lys708.

The protein belongs to the GcvP family. In terms of assembly, the glycine cleavage system is composed of four proteins: P, T, L and H. Pyridoxal 5'-phosphate serves as cofactor.

The enzyme catalyses N(6)-[(R)-lipoyl]-L-lysyl-[glycine-cleavage complex H protein] + glycine + H(+) = N(6)-[(R)-S(8)-aminomethyldihydrolipoyl]-L-lysyl-[glycine-cleavage complex H protein] + CO2. In terms of biological role, the glycine cleavage system catalyzes the degradation of glycine. The P protein binds the alpha-amino group of glycine through its pyridoxal phosphate cofactor; CO(2) is released and the remaining methylamine moiety is then transferred to the lipoamide cofactor of the H protein. This chain is Glycine dehydrogenase (decarboxylating), found in Shigella flexneri.